The primary structure comprises 137 residues: Ciliary microtubule inner protein 1 (137 aa).

As to expression, expressed in airway epithelial cells, renal tubular cells, pancreatic acinar cells and epithelial cells of the stomach, duodenum, and gallbladder (at protein level).

Its subcellular location is the cell projection. It localises to the cilium. The protein is Ciliary microtubule inner protein 1 of Homo sapiens (Human).